The chain runs to 507 residues: Myocyte-specific enhancer factor 2D (507 aa).

Positions 3-57 (RKKIQIQRITDERNRQVTFTKRKFGLMKKAYELSVLCDCEIALIIFNHSNKLFQY) constitute an MADS-box domain. Positions 58 to 86 (ASTDMDKVLLKYTEYNEPHESRTNADIIE) form a DNA-binding region, mef2-type. 5 positions are modified to phosphoserine: S98, S106, S110, S121, and S180. The segment at 174–207 (TDPRLLSPQQPALQRNSVSPGLPQRPASAGAMLG) is disordered. Polar residues predominate over residues 180-192 (SPQQPALQRNSVS). A Phosphoserine; by PKA modification is found at S190. At S231 the chain carries Phosphoserine. Disordered regions lie at residues 244–267 (NKVI…PSRK), 357–392 (WQQP…QQPH), and 423–507 (SIKS…WTLK). K245 is subject to N6-acetyllysine. Residue S251 is modified to Phosphoserine. Residues 363 to 389 (PQQPQPPQPPQSQPQPPQPQPQQPPQQ) show a composition bias toward pro residues. An N6-acetyllysine; alternate modification is found at K425. K425 is covalently cross-linked (Glycyl lysine isopeptide (Lys-Gly) (interchain with G-Cter in SUMO); alternate). At S430 the chain carries Phosphoserine.

In terms of assembly, forms a complex with class II HDACs in undifferentiating cells. On myogenic differentiation, HDACs are released into the cytoplasm allowing MEF2s to interact with other proteins for activation. Interacts with HDAC4 (in undifferentiating cells); the interaction translocates MEF2D to nuclear dots. Forms a heterodimer with MEF2A. Interacts with MAPK7; the interaction phosphorylates but does not activate MEF2D. Interacts with MYOG. Interacts with CCAR2 and HDAC3. Post-translationally, phosphorylated on Ser-430 by CDK5 is required for Lys-425 sumoylation and inhibits transcriptional activity. In neurons, enhanced CDK5 activity induced by neurotoxins promotes caspase 3-mediated cleavage leading to neuron apoptosis. Phosphorylation on Ser-180 can be enhanced by EGF. Phosphorylated and activated by CaMK4. In terms of processing, acetylated on Lys-425 by CREBBP. Acetylated by EP300. Deacetylated by SIRT1 and HDAC3. Sumoylated on Lys-425 with SUMO2 but not SUMO1; which inhibits transcriptional activity and myogenic activity. Desumoylated by SENP3.

Its subcellular location is the nucleus. In terms of biological role, transcriptional activator which binds specifically to the MEF2 element, 5'-YTA[AT](4)TAR-3', found in numerous muscle-specific, growth factor- and stress-induced genes. Mediates cellular functions not only in skeletal and cardiac muscle development, but also in neuronal differentiation and survival. Plays diverse roles in the control of cell growth, survival and apoptosis via p38 MAPK signaling in muscle-specific and/or growth factor-related transcription. Plays a critical role in the regulation of neuronal apoptosis. The sequence is that of Myocyte-specific enhancer factor 2D (Mef2d) from Rattus norvegicus (Rat).